Consider the following 245-residue polypeptide: 1-(5-phosphoribosyl)-5-[(5-phosphoribosylamino)methylideneamino] imidazole-4-carboxamide isomerase (245 aa).

The Proton acceptor role is filled by Asp-8. Catalysis depends on Asp-130, which acts as the Proton donor.

Belongs to the HisA/HisF family.

It localises to the cytoplasm. The catalysed reaction is 1-(5-phospho-beta-D-ribosyl)-5-[(5-phospho-beta-D-ribosylamino)methylideneamino]imidazole-4-carboxamide = 5-[(5-phospho-1-deoxy-D-ribulos-1-ylimino)methylamino]-1-(5-phospho-beta-D-ribosyl)imidazole-4-carboxamide. It participates in amino-acid biosynthesis; L-histidine biosynthesis; L-histidine from 5-phospho-alpha-D-ribose 1-diphosphate: step 4/9. This Pseudomonas aeruginosa (strain LESB58) protein is 1-(5-phosphoribosyl)-5-[(5-phosphoribosylamino)methylideneamino] imidazole-4-carboxamide isomerase.